Consider the following 340-residue polypeptide: Probable complex I intermediate-associated protein 30, mitochondrial (340 aa).

Belongs to the CIA30 family.

It localises to the mitochondrion. Its function is as follows. Chaperone protein involved in the assembly of the mitochondrial NADH:ubiquinone oxidoreductase complex (complex I). Required for normal growth and reproduction. This is Probable complex I intermediate-associated protein 30, mitochondrial (nuaf-1) from Caenorhabditis elegans.